Consider the following 520-residue polypeptide: Hydroxymethylglutaryl-CoA synthase, cytoplasmic (520 aa).

The residue at position 4 (serine 4) is a Phosphoserine. (3S)-3-hydroxy-3-methylglutaryl-CoA is bound by residues aspartate 43 and alanine 44. 44–46 (AGK) serves as a coordination point for CoA. Lysine 46 carries the post-translational modification N6-acetyllysine. Residue glutamate 95 is the Proton donor/acceptor of the active site. 5 residues coordinate (3S)-3-hydroxy-3-methylglutaryl-CoA: cysteine 129, asparagine 167, threonine 171, serine 221, and histidine 264. Residue cysteine 129 is the Acyl-thioester intermediate of the active site. A CoA-binding site is contributed by asparagine 167. Serine 221 is a CoA binding site. Residue histidine 264 is the Proton donor/acceptor of the active site. Residues lysine 269 and lysine 273 each coordinate CoA. Residues lysine 273, asparagine 343, and serine 377 each contribute to the (3S)-3-hydroxy-3-methylglutaryl-CoA site. Residue lysine 273 is modified to N6-acetyllysine. Threonine 476 bears the Phosphothreonine mark. Residues 492–520 (HIPSPAKKVPRLPATAAEPEAAVISNGEH) form a disordered region. Phosphoserine is present on residues serine 495 and serine 516.

The protein belongs to the thiolase-like superfamily. HMG-CoA synthase family. As to quaternary structure, homodimer.

The protein localises to the cytoplasm. It catalyses the reaction acetoacetyl-CoA + acetyl-CoA + H2O = (3S)-3-hydroxy-3-methylglutaryl-CoA + CoA + H(+). It functions in the pathway metabolic intermediate biosynthesis; (R)-mevalonate biosynthesis; (R)-mevalonate from acetyl-CoA: step 2/3. In terms of biological role, catalyzes the condensation of acetyl-CoA with acetoacetyl-CoA to form HMG-CoA, which is converted by HMG-CoA reductase (HMGCR) into mevalonate, a precursor for cholesterol synthesis. This chain is Hydroxymethylglutaryl-CoA synthase, cytoplasmic, found in Homo sapiens (Human).